The primary structure comprises 371 residues: tRNA-specific 2-thiouridylase MnmA (371 aa).

Residues 22 to 29 (GLSGGVDS) and methionine 48 contribute to the ATP site. Residues 108–110 (NPD) are interaction with target base in tRNA. Cysteine 113 acts as the Nucleophile in catalysis. Cysteine 113 and cysteine 209 are oxidised to a cystine. Glycine 137 provides a ligand contact to ATP. The interval 159 to 161 (KDQ) is interaction with tRNA. The active-site Cysteine persulfide intermediate is cysteine 209.

This sequence belongs to the MnmA/TRMU family.

The protein localises to the cytoplasm. It carries out the reaction S-sulfanyl-L-cysteinyl-[protein] + uridine(34) in tRNA + AH2 + ATP = 2-thiouridine(34) in tRNA + L-cysteinyl-[protein] + A + AMP + diphosphate + H(+). Functionally, catalyzes the 2-thiolation of uridine at the wobble position (U34) of tRNA, leading to the formation of s(2)U34. This Coxiella burnetii (strain CbuG_Q212) (Coxiella burnetii (strain Q212)) protein is tRNA-specific 2-thiouridylase MnmA.